A 229-amino-acid polypeptide reads, in one-letter code: MNIKAPVITIDGPSGSGKGTIAGKLAKHLGWCLLDSGALYRLLAFAARNHGVDLTNEESLKLLAAHLDVQFLGATENHPQRIILEGDDVTDDLRNEQVGAWASQVAALPAVRDALLQRQRAFQEPPGLVADGRDMGTVVFPDAPLKIFLTASAEERARRRYLQLKGKVDGVSLSSLLDEIRARDERDTQRAVAPLKPAADAIQLDSTELSIDQVLQRILSEIAIRDIAG.

12–20 contacts ATP; that stretch reads GPSGSGKGT.

This sequence belongs to the cytidylate kinase family. Type 1 subfamily.

Its subcellular location is the cytoplasm. The enzyme catalyses CMP + ATP = CDP + ADP. It catalyses the reaction dCMP + ATP = dCDP + ADP. This is Cytidylate kinase from Pseudomonas fluorescens (strain ATCC BAA-477 / NRRL B-23932 / Pf-5).